The primary structure comprises 560 residues: Phenol regulator MopR (560 aa).

His106 and Trp134 together coordinate phenol. Zn(2+) is bound by residues Cys155, Glu178, Cys181, and Cys189. The region spanning 245–474 is the Sigma-54 factor interaction domain; it reads AVGESVAYRK…LENLLERATL (230 aa). Residues 273–280 and 336–345 contribute to the ATP site; these read GETGVGKE and AHGGTIFLDE.

Homodimer.

Activity is triggered by phenol binding. In terms of biological role, involved in the regulation of the phenol degradation pathway. Activates phenol hydroxylase expression in the presence of phenol. The sequence is that of Phenol regulator MopR from Acinetobacter guillouiae (Acinetobacter genomosp. 11).